Here is a 375-residue protein sequence, read N- to C-terminus: Probable UDP-N-acetylglucosamine 2-epimerase (375 aa).

Belongs to the UDP-N-acetylglucosamine 2-epimerase family.

It is found in the cytoplasm. The catalysed reaction is UDP-N-acetyl-alpha-D-glucosamine = UDP-N-acetyl-alpha-D-mannosamine. Its pathway is glycan metabolism; exopolysaccharide EPS I biosynthesis. Its function is as follows. May be involved in synthesis of N-acetyltrideoxygalactose, a component of exopolysaccharide EPS I which functions as a virulence factor. The chain is Probable UDP-N-acetylglucosamine 2-epimerase (epsC) from Ralstonia nicotianae (strain ATCC BAA-1114 / GMI1000) (Ralstonia solanacearum).